A 76-amino-acid polypeptide reads, in one-letter code: Brevinin-2ISb (76 aa).

An N-terminal signal peptide occupies residues 1–22 (MFTMKKSLLVLFFLGTISLSLC). Residues 23-41 (QEERNADEEDGGEATEEEV) constitute a propeptide, removed in mature form. Cys-70 and Cys-76 form a disulfide bridge.

As to expression, expressed by the skin glands.

It is found in the secreted. Its function is as follows. Has antimicrobial activity against Gram-negative bacterium E.coli ATCC 8739 (MIC=12.5 ug), against Gram positive bacteria S.aureus ATCC 6538 (MIC=6.3 ug) and B.subtilis ATCC 6633 (MIC=25 ug). Has no activity against methicillin-resistant S.aureus ATCC 43300 (MIC= ug) and fungus C.albicans ATCC 90028. This Odorrana ishikawae (Ishikawa's frog) protein is Brevinin-2ISb.